A 563-amino-acid chain; its full sequence is Light-independent protochlorophyllide reductase subunit B (563 aa).

Position 36 (D36) interacts with [4Fe-4S] cluster. Residue D293 is the Proton donor of the active site. Substrate is bound at residue 437-438 (GM). Positions 459–478 (ERREAEFGNQKVETGEPGTG) are disordered.

Belongs to the ChlB/BchB/BchZ family. In terms of assembly, protochlorophyllide reductase is composed of three subunits; BchL, BchN and BchB. Forms a heterotetramer of two BchB and two BchN subunits. Requires [4Fe-4S] cluster as cofactor.

It catalyses the reaction chlorophyllide a + oxidized 2[4Fe-4S]-[ferredoxin] + 2 ADP + 2 phosphate = protochlorophyllide a + reduced 2[4Fe-4S]-[ferredoxin] + 2 ATP + 2 H2O. It functions in the pathway porphyrin-containing compound metabolism; bacteriochlorophyll biosynthesis (light-independent). Functionally, component of the dark-operative protochlorophyllide reductase (DPOR) that uses Mg-ATP and reduced ferredoxin to reduce ring D of protochlorophyllide (Pchlide) to form chlorophyllide a (Chlide). This reaction is light-independent. The NB-protein (BchN-BchB) is the catalytic component of the complex. The chain is Light-independent protochlorophyllide reductase subunit B from Roseiflexus castenholzii (strain DSM 13941 / HLO8).